The primary structure comprises 149 residues: Nucleoside diphosphate kinase (149 aa).

6 residues coordinate ATP: Lys9, Phe57, Arg85, Thr91, Arg102, and Asn112. His115 functions as the Pros-phosphohistidine intermediate in the catalytic mechanism.

The protein belongs to the NDK family. In terms of assembly, homotetramer. The cofactor is Mg(2+).

The protein localises to the cytoplasm. The enzyme catalyses a 2'-deoxyribonucleoside 5'-diphosphate + ATP = a 2'-deoxyribonucleoside 5'-triphosphate + ADP. It carries out the reaction a ribonucleoside 5'-diphosphate + ATP = a ribonucleoside 5'-triphosphate + ADP. In terms of biological role, major role in the synthesis of nucleoside triphosphates other than ATP. The ATP gamma phosphate is transferred to the NDP beta phosphate via a ping-pong mechanism, using a phosphorylated active-site intermediate. This Staphylococcus aureus (strain MSSA476) protein is Nucleoside diphosphate kinase.